We begin with the raw amino-acid sequence, 237 residues long: Phosphatidylserine decarboxylase proenzyme (237 aa).

Serine 206 serves as the catalytic Schiff-base intermediate with substrate; via pyruvic acid. At serine 206 the chain carries Pyruvic acid (Ser); by autocatalysis.

This sequence belongs to the phosphatidylserine decarboxylase family. PSD-A subfamily. As to quaternary structure, heterodimer of a large membrane-associated beta subunit and a small pyruvoyl-containing alpha subunit. The cofactor is pyruvate. Post-translationally, is synthesized initially as an inactive proenzyme. Formation of the active enzyme involves a self-maturation process in which the active site pyruvoyl group is generated from an internal serine residue via an autocatalytic post-translational modification. Two non-identical subunits are generated from the proenzyme in this reaction, and the pyruvate is formed at the N-terminus of the alpha chain, which is derived from the carboxyl end of the proenzyme. The post-translation cleavage follows an unusual pathway, termed non-hydrolytic serinolysis, in which the side chain hydroxyl group of the serine supplies its oxygen atom to form the C-terminus of the beta chain, while the remainder of the serine residue undergoes an oxidative deamination to produce ammonia and the pyruvoyl prosthetic group on the alpha chain.

It localises to the cell membrane. It catalyses the reaction a 1,2-diacyl-sn-glycero-3-phospho-L-serine + H(+) = a 1,2-diacyl-sn-glycero-3-phosphoethanolamine + CO2. It functions in the pathway phospholipid metabolism; phosphatidylethanolamine biosynthesis; phosphatidylethanolamine from CDP-diacylglycerol: step 2/2. Functionally, catalyzes the formation of phosphatidylethanolamine (PtdEtn) from phosphatidylserine (PtdSer). This chain is Phosphatidylserine decarboxylase proenzyme, found in Rhodococcus jostii (strain RHA1).